The primary structure comprises 298 residues: Ribosomal RNA small subunit methyltransferase H (298 aa).

S-adenosyl-L-methionine-binding positions include 31 to 33, Asp-50, Tyr-80, Asp-95, and Gln-102; that span reads GGH. The interval 255 to 298 is disordered; that stretch reads AEKDLYGNTNKPFKSVGKAIDPDDEEKERNNRARSARLRIAERE.

The protein belongs to the methyltransferase superfamily. RsmH family.

It localises to the cytoplasm. It carries out the reaction cytidine(1402) in 16S rRNA + S-adenosyl-L-methionine = N(4)-methylcytidine(1402) in 16S rRNA + S-adenosyl-L-homocysteine + H(+). Functionally, specifically methylates the N4 position of cytidine in position 1402 (C1402) of 16S rRNA. This Cytophaga hutchinsonii (strain ATCC 33406 / DSM 1761 / CIP 103989 / NBRC 15051 / NCIMB 9469 / D465) protein is Ribosomal RNA small subunit methyltransferase H.